The primary structure comprises 122 residues: MRHYEIVLLIHPDQSEQVPAMLERYKGLVTAAGGKVHRVEDWGRRQLAYLINKLAKAHYLCLNIECSKETLLELETGFKFNDAVLRHLTVVKSKAETAPSIMMKAVEREESRKAPQPQEAAA.

This sequence belongs to the bacterial ribosomal protein bS6 family.

Functionally, binds together with bS18 to 16S ribosomal RNA. The protein is Small ribosomal subunit protein bS6 of Methylibium petroleiphilum (strain ATCC BAA-1232 / LMG 22953 / PM1).